The primary structure comprises 471 residues: UDP-N-acetylmuramoylalanine--D-glutamate ligase (471 aa).

Gly-127–Thr-133 provides a ligand contact to ATP.

Belongs to the MurCDEF family.

The protein localises to the cytoplasm. The enzyme catalyses UDP-N-acetyl-alpha-D-muramoyl-L-alanine + D-glutamate + ATP = UDP-N-acetyl-alpha-D-muramoyl-L-alanyl-D-glutamate + ADP + phosphate + H(+). It participates in cell wall biogenesis; peptidoglycan biosynthesis. Functionally, cell wall formation. Catalyzes the addition of glutamate to the nucleotide precursor UDP-N-acetylmuramoyl-L-alanine (UMA). The protein is UDP-N-acetylmuramoylalanine--D-glutamate ligase of Colwellia psychrerythraea (strain 34H / ATCC BAA-681) (Vibrio psychroerythus).